Here is a 1172-residue protein sequence, read N- to C-terminus: Lysylphosphatidylglycerol biosynthesis bifunctional protein LysX (1172 aa).

A disordered region spans residues 1 to 34; that stretch reads MGLHLTVPGLRRDGRGVQSNSHDTSSKTTADISR. A phosphatidylglycerol lysyltransferase region spans residues 1–663; sequence MGLHLTVPGL…LLHHDGSAPD (663 aa). Residues 17–31 are compositionally biased toward polar residues; sequence VQSNSHDTSSKTTAD. The next 7 helical transmembrane spans lie at 80 to 100, 122 to 142, 146 to 166, 177 to 197, 214 to 234, 272 to 292, and 612 to 632; these read VPAA…LASV, FPDT…ALTA, IAWL…AAEI, FGEN…VLGY, AVWL…VELF, AIFG…LFLS, and VIPR…LPFS. Residues 664–1172 are lysine--tRNA ligase; the sequence is VSGLRQVGLT…TLPFPLAKPH (509 aa). Positions 726–804 form a DNA-binding region, OB; that stretch reads VSVSGRIMRI…SLIVSGWRLI (79 aa). Residues aspartate 1084 and glutamate 1091 each contribute to the Mg(2+) site.

This sequence in the N-terminal section; belongs to the LPG synthetase family. It in the C-terminal section; belongs to the class-II aminoacyl-tRNA synthetase family. The cofactor is Mg(2+).

The protein localises to the cell membrane. The catalysed reaction is tRNA(Lys) + L-lysine + ATP = L-lysyl-tRNA(Lys) + AMP + diphosphate. It catalyses the reaction L-lysyl-tRNA(Lys) + a 1,2-diacyl-sn-glycero-3-phospho-(1'-sn-glycerol) = a 1,2-diacyl-sn-glycero-3-phospho-1'-(3'-O-L-lysyl)-sn-glycerol + tRNA(Lys). Catalyzes the production of L-lysyl-tRNA(Lys)transfer and the transfer of a lysyl group from L-lysyl-tRNA(Lys) to membrane-bound phosphatidylglycerol (PG), which produces lysylphosphatidylglycerol (LPG), one of the components of the bacterial membrane with a positive net charge. LPG synthesis contributes to the resistance to cationic antimicrobial peptides (CAMPs) and likely protects M.tuberculosis against the CAMPs produced by competiting microorganisms (bacteriocins). In fact, the modification of anionic phosphatidylglycerol with positively charged L-lysine results in repulsion of the peptides. The protein is Lysylphosphatidylglycerol biosynthesis bifunctional protein LysX (lysX) of Mycobacterium tuberculosis (strain F11).